The chain runs to 303 residues: GTPase Era (303 aa).

An Era-type G domain is found at 9 to 176; that stretch reads KSGFVSIIGR…VEQIVEHMEE (168 aa). The interval 17–24 is G1; sequence GRPNVGKS. Residue 17–24 coordinates GTP; sequence GRPNVGKS. The segment at 43–47 is G2; that stretch reads QTTRN. A G3 region spans residues 64 to 67; the sequence is DTPG. GTP is bound by residues 64–68 and 126–129; these read DTPGI and NKID. The interval 126–129 is G4; that stretch reads NKID. A G5 region spans residues 155–157; that stretch reads ISA. The KH type-2 domain occupies 199 to 284; it reads IREKVLHLTK…YLELWVKVQK (86 aa).

This sequence belongs to the TRAFAC class TrmE-Era-EngA-EngB-Septin-like GTPase superfamily. Era GTPase family. Monomer.

The protein resides in the cytoplasm. It is found in the cell membrane. In terms of biological role, an essential GTPase that binds both GDP and GTP, with rapid nucleotide exchange. Plays a role in 16S rRNA processing and 30S ribosomal subunit biogenesis and possibly also in cell cycle regulation and energy metabolism. This Shouchella clausii (strain KSM-K16) (Alkalihalobacillus clausii) protein is GTPase Era.